A 339-amino-acid polypeptide reads, in one-letter code: Ketol-acid reductoisomerase (NADP(+)) (339 aa).

The 182-residue stretch at 1-182 (MRVYYDRDAD…GGGRAGIIET (182 aa)) folds into the KARI N-terminal Rossmann domain. NADP(+)-binding positions include 24 to 27 (YGSQ), arginine 48, serine 51, threonine 53, and 83 to 86 (DELQ). Histidine 108 is a catalytic residue. NADP(+) is bound at residue glycine 134. Residues 183-328 (TFREECETDL…AKLREMMPWI (146 aa)) form the KARI C-terminal knotted domain. Mg(2+) is bound by residues aspartate 191, glutamate 195, glutamate 227, and glutamate 231. Serine 252 serves as a coordination point for substrate.

This sequence belongs to the ketol-acid reductoisomerase family. Mg(2+) is required as a cofactor.

It catalyses the reaction (2R)-2,3-dihydroxy-3-methylbutanoate + NADP(+) = (2S)-2-acetolactate + NADPH + H(+). The catalysed reaction is (2R,3R)-2,3-dihydroxy-3-methylpentanoate + NADP(+) = (S)-2-ethyl-2-hydroxy-3-oxobutanoate + NADPH + H(+). It functions in the pathway amino-acid biosynthesis; L-isoleucine biosynthesis; L-isoleucine from 2-oxobutanoate: step 2/4. Its pathway is amino-acid biosynthesis; L-valine biosynthesis; L-valine from pyruvate: step 2/4. In terms of biological role, involved in the biosynthesis of branched-chain amino acids (BCAA). Catalyzes an alkyl-migration followed by a ketol-acid reduction of (S)-2-acetolactate (S2AL) to yield (R)-2,3-dihydroxy-isovalerate. In the isomerase reaction, S2AL is rearranged via a Mg-dependent methyl migration to produce 3-hydroxy-3-methyl-2-ketobutyrate (HMKB). In the reductase reaction, this 2-ketoacid undergoes a metal-dependent reduction by NADPH to yield (R)-2,3-dihydroxy-isovalerate. This chain is Ketol-acid reductoisomerase (NADP(+)), found in Rhodopseudomonas palustris (strain BisA53).